Consider the following 360-residue polypeptide: MLLLLAEFLQQFYKGFAVFQYLSLRGILGVLTALTLSLCLGPWMIRTLQMRQIGQSVRNDGPQSHLSKSGTPTMGGALILSSIGISTLLWADLSNRYVWVVLLVTFLFGAIGWVDDYRKVIEKNSRGLPSRWKYFWQSVFGLCAAIFLYTTAPSATETTLIVPMLKDVRIPLGIGFIVLTYFVIVGSSNAVNLTDGLDGLAIMPTVMVGGALGIFCYLSGNVKFAEYLLIPYVPGAGELIVFSGALIGAGLGFLWFNTYPAQVFMGDVGALALGAALGTMAVIVRQEMVLFIMGGVFVMETLSVVIQVASFKLTGRRVFRMAPIHHHFELKGWPEPRVIVRFWIITVILVLIGLATLKLR.

Transmembrane regions (helical) follow at residues Arg-25–Ile-45, Thr-73–Leu-93, Tyr-97–Tyr-117, Phe-135–Ala-155, Ile-170–Ala-190, Gly-199–Ser-219, Ala-236–Phe-256, Val-263–Ile-283, Met-288–Val-308, and Val-338–Lys-358.

The protein belongs to the glycosyltransferase 4 family. MraY subfamily. Mg(2+) is required as a cofactor.

The protein resides in the cell inner membrane. It carries out the reaction UDP-N-acetyl-alpha-D-muramoyl-L-alanyl-gamma-D-glutamyl-meso-2,6-diaminopimeloyl-D-alanyl-D-alanine + di-trans,octa-cis-undecaprenyl phosphate = di-trans,octa-cis-undecaprenyl diphospho-N-acetyl-alpha-D-muramoyl-L-alanyl-D-glutamyl-meso-2,6-diaminopimeloyl-D-alanyl-D-alanine + UMP. Its pathway is cell wall biogenesis; peptidoglycan biosynthesis. In terms of biological role, catalyzes the initial step of the lipid cycle reactions in the biosynthesis of the cell wall peptidoglycan: transfers peptidoglycan precursor phospho-MurNAc-pentapeptide from UDP-MurNAc-pentapeptide onto the lipid carrier undecaprenyl phosphate, yielding undecaprenyl-pyrophosphoryl-MurNAc-pentapeptide, known as lipid I. This Pseudomonas syringae pv. syringae (strain B728a) protein is Phospho-N-acetylmuramoyl-pentapeptide-transferase.